Here is a 119-residue protein sequence, read N- to C-terminus: Large ribosomal subunit protein uL18 (119 aa).

The protein belongs to the universal ribosomal protein uL18 family. Part of the 50S ribosomal subunit; part of the 5S rRNA/L5/L18/L25 subcomplex. Contacts the 5S and 23S rRNAs.

Its function is as follows. This is one of the proteins that bind and probably mediate the attachment of the 5S RNA into the large ribosomal subunit, where it forms part of the central protuberance. This chain is Large ribosomal subunit protein uL18, found in Anaeromyxobacter dehalogenans (strain 2CP-1 / ATCC BAA-258).